Consider the following 321-residue polypeptide: Cytoskeleton protein RodZ (321 aa).

The Cytoplasmic segment spans residues 1–111 (MNTEATHDQN…LGKRRKKRDG (111 aa)). Positions 19 to 71 (LRNAREQLGLSQQAVAERLCLKVSTVRDIEEDKAPSDLASTFLRGYIRSYARL) constitute an HTH cro/C1-type domain. The H-T-H motif DNA-binding region spans 30–49 (QQAVAERLCLKVSTVRDIEE). The chain crosses the membrane as a helical; Signal-anchor for type II membrane protein span at residues 112-132 (WLMSFTWLVLFVVVGLTGAWW). Residues 133–321 (WQNHKAQQEE…TINAEPTSAQ (189 aa)) lie on the Periplasmic side of the membrane. The tract at residues 167-190 (DTRAAASQDTTPAETAPAAPVDST) is disordered. A compositionally biased stretch (low complexity) spans 176 to 190 (TTPAETAPAAPVDST).

It belongs to the RodZ family.

It is found in the cell inner membrane. Its function is as follows. Cytoskeletal protein that is involved in cell-shape control through regulation of the length of the long axis. This is Cytoskeleton protein RodZ from Salmonella arizonae (strain ATCC BAA-731 / CDC346-86 / RSK2980).